We begin with the raw amino-acid sequence, 317 residues long: mRNA 3'-end-processing protein yth-1 (317 aa).

The segment at 1-20 (MATTTQTTTNSLPSGAGGPQ) is disordered. 5 C3H1-type zinc fingers span residues 51–78 (PADRPICKAYASGNCPLKSHCPERHVTA), 93–120 (GFGSLVCKHWLRGLCKKGESCEFLHEYN), 121–149 (LRKMPECNFFVRNGYCSNGDECLYLHIDP), 150–177 (LSRLPPCPHYERGFCPLGPRCDKKHFRR), and 179–202 (LCLYYLAGFCPDGKGCKEGAHPRW). Residues 202–217 (WTADKDMEKPRAKGEG) are compositionally biased toward basic and acidic residues. The tract at residues 202–317 (WTADKDMEKP…GRGGFRGKGH (116 aa)) is disordered. Residues 223-237 (QQQQQQQQQQHMGDA) show a composition bias toward low complexity. Residues 253–288 (YMDRERERDRDNREREMMMQGRDRDGGGHDRHKDRF) show a composition bias toward basic and acidic residues. Over residues 289–301 (GGGGGGGGGGRGR) the composition is skewed to gly residues. Residues 302-317 (GGWRGRGRGGFRGKGH) are compositionally biased toward basic residues.

It belongs to the CPSF4/YTH1 family.

It localises to the nucleus. Its function is as follows. Component of the cleavage factor I (CF I) involved in pre-mRNA 3'-end processing. The polypeptide is mRNA 3'-end-processing protein yth-1 (yth-1) (Neurospora crassa (strain ATCC 24698 / 74-OR23-1A / CBS 708.71 / DSM 1257 / FGSC 987)).